Here is a 364-residue protein sequence, read N- to C-terminus: UDP-N-acetylglucosamine--N-acetylmuramyl-(pentapeptide) pyrophosphoryl-undecaprenol N-acetylglucosamine transferase (364 aa).

UDP-N-acetyl-alpha-D-glucosamine-binding positions include 10–12 (TGG), asparagine 124, arginine 166, serine 196, isoleucine 252, and glutamine 297.

It belongs to the glycosyltransferase 28 family. MurG subfamily.

The protein resides in the cell membrane. It catalyses the reaction di-trans,octa-cis-undecaprenyl diphospho-N-acetyl-alpha-D-muramoyl-L-alanyl-D-glutamyl-meso-2,6-diaminopimeloyl-D-alanyl-D-alanine + UDP-N-acetyl-alpha-D-glucosamine = di-trans,octa-cis-undecaprenyl diphospho-[N-acetyl-alpha-D-glucosaminyl-(1-&gt;4)]-N-acetyl-alpha-D-muramoyl-L-alanyl-D-glutamyl-meso-2,6-diaminopimeloyl-D-alanyl-D-alanine + UDP + H(+). The protein operates within cell wall biogenesis; peptidoglycan biosynthesis. Cell wall formation. Catalyzes the transfer of a GlcNAc subunit on undecaprenyl-pyrophosphoryl-MurNAc-pentapeptide (lipid intermediate I) to form undecaprenyl-pyrophosphoryl-MurNAc-(pentapeptide)GlcNAc (lipid intermediate II). The sequence is that of UDP-N-acetylglucosamine--N-acetylmuramyl-(pentapeptide) pyrophosphoryl-undecaprenol N-acetylglucosamine transferase from Ruminiclostridium cellulolyticum (strain ATCC 35319 / DSM 5812 / JCM 6584 / H10) (Clostridium cellulolyticum).